Reading from the N-terminus, the 483-residue chain is Altronate oxidoreductase (483 aa).

18–29 is an NAD(+) binding site; that stretch reads IIQFGEGNFLRA.

The protein belongs to the mannitol dehydrogenase family. UxaB subfamily.

It carries out the reaction D-altronate + NAD(+) = keto-D-tagaturonate + NADH + H(+). It participates in carbohydrate metabolism; pentose and glucuronate interconversion. In Escherichia coli O157:H7, this protein is Altronate oxidoreductase (uxaB).